The following is a 233-amino-acid chain: B-cell lymphoma/leukemia 10 (233 aa).

At M1 the chain carries N-acetylmethionine. The region spanning 13 to 101 (LTEVKKDALE…QNFLIQKITD (89 aa)) is the CARD domain. Residues K17, K31, and K63 each participate in a glycyl lysine isopeptide (Lys-Gly) (interchain with G-Cter in ubiquitin) cross-link. S138 is modified (phosphoserine). A disordered region spans residues 187-233 (FSSTTLPRPGDPGAPPLPPDLQLEEEGTCANSSEMFLPLRSRTVSRQ). Pro residues predominate over residues 195–205 (PGDPGAPPLPP).

Homomultimer; homooligomerized following recruitment by CARD domain-containing proteins that form a nucleating helical template that recruits BCL10 via CARD-CARD interaction. Self-associates by CARD-CARD interaction and interacts with other CARD-proteins such as CARD9, CARD10, CARD11 and CARD14. Forms a complex with CARD14 and MALT1; resulting in the formation of a CBM (CARD14-BCL10-MALT1) complex. Forms a complex with CARD11 and MALT1; resulting in the formation of a CBM (CARD11-BCL10-MALT1) complex. Forms a complex with CARD9 and MALT1; resulting in the formation of a CBM (CARD9-BCL10-MALT1) complex. Found in a membrane raft complex, at least composed of BCL10, CARD11, DPP4 and IKBKB. Binds caspase-9 with its C-terminal domain. Interacts with TRAF2 and BIRC2/c-IAP2. Interacts with PELI2 and SOCS3; these interactions may be mutually exclusive. Phosphorylated. Phosphorylation results in dissociation from TRAF2 and binding to BIRC2/c-IAP2. Phosphorylated by IKBKB/IKKB. In terms of processing, ubiquitinated via both 'Lys-63'-linked and linear ('Met-1'-linked) polyubiquitin chains in response to T-cell receptor (TCR) activation. Ubiquitination is recognized by IKBKG/NEMO, the regulatory subunit of I-kappa-B kinase (IKK), and is required for TCR-induced NF-kappa-B activation. Linear ubiquitination at Lys-17, Lys-31 and Lys-63 is mediated by RNF31/HOIP; linear ubiquitination is recognized with much higher affinity than 'Lys-63'-linked ubiquitin by IKBKG/NEMO. CARD11 is required for linear ubiquitination by HOIP by promoting the targeting of BCL10 to RNF31/HOIP. Post-translationally, proteolytically cleaved by MALT1; required for T-cell activation. Ubiquitous.

The protein localises to the cytoplasm. Its subcellular location is the perinuclear region. It is found in the membrane raft. In terms of biological role, plays a key role in both adaptive and innate immune signaling by bridging CARD domain-containing proteins to immune activation. Acts by channeling adaptive and innate immune signaling downstream of CARD domain-containing proteins CARD9, CARD11 and CARD14 to activate NF-kappa-B and MAP kinase p38 (MAPK11, MAPK12, MAPK13 and/or MAPK14) pathways which stimulate expression of genes encoding pro-inflammatory cytokines and chemokines. Recruited by activated CARD domain-containing proteins: homooligomerized CARD domain-containing proteins form a nucleating helical template that recruits BCL10 via CARD-CARD interaction, thereby promoting polymerization of BCL10, subsequent recruitment of MALT1 and formation of a CBM complex. This leads to activation of NF-kappa-B and MAP kinase p38 (MAPK11, MAPK12, MAPK13 and/or MAPK14) pathways which stimulate expression of genes encoding pro-inflammatory cytokines and chemokines. Activated by CARD9 downstream of C-type lectin receptors; CARD9-mediated signals are essential for antifungal immunity. Activated by CARD11 downstream of T-cell receptor (TCR) and B-cell receptor (BCR). Promotes apoptosis, pro-caspase-9 maturation and activation of NF-kappa-B via NIK and IKK. The chain is B-cell lymphoma/leukemia 10 from Homo sapiens (Human).